Here is a 1322-residue protein sequence, read N- to C-terminus: WD repeat-containing protein 17 (1322 aa).

WD repeat units follow at residues 81–121 (EHKK…VIAK), 123–164 (DSTK…SGVI), 171–211 (SFLS…QKHV), 221–261 (DEED…CITT), and 266–307 (SAAA…PIDN). The disordered stretch occupies residues 328–352 (KFSVQSPTKNHYTSSTSEAVPPPTL). Residues 330–345 (SVQSPTKNHYTSSTSE) show a composition bias toward polar residues. WD repeat units follow at residues 391–431 (GHVE…AVYT), 434–474 (GNEG…IIQR), 478–518 (HGTN…LHKY), 519–559 (KHPA…DQPL), 564–604 (GHTA…CINI), 607–647 (GHTA…CVDT), and 650–690 (DHGA…TPVQ).

This is WD repeat-containing protein 17 (WDR17) from Homo sapiens (Human).